Reading from the N-terminus, the 433-residue chain is CinA-like protein (433 aa).

This sequence belongs to the CinA family.

This chain is CinA-like protein, found in Prochlorococcus marinus subsp. pastoris (strain CCMP1986 / NIES-2087 / MED4).